The following is a 123-amino-acid chain: Cholecystokinin A (123 aa).

Residues methionine 1–alanine 20 form the signal peptide. The propeptide occupies histidine 21 to arginine 103. Sulfotyrosine is present on tyrosine 105. At phenylalanine 111 the chain carries Phenylalanine amide. Residues serine 115–serine 123 constitute a propeptide that is removed on maturation.

The protein belongs to the gastrin/cholecystokinin family. Post-translationally, the precursor is cleaved by proteases to produce a number of active cholecystokinins. In terms of tissue distribution, brain, gastrointestinal tract and lung.

The protein resides in the secreted. This chain is Cholecystokinin A (cck-a), found in Xenopus laevis (African clawed frog).